The sequence spans 293 residues: Protease HtpX (293 aa).

2 helical membrane-spanning segments follow: residues 4 to 24 and 34 to 54; these read IALF…VLSL and GLMI…LLMS. H139 contacts Zn(2+). Residue E140 is part of the active site. Position 143 (H143) interacts with Zn(2+). 2 helical membrane-spanning segments follow: residues 158–178 and 193–213; these read IVNT…AGFL and MVYF…ASII. Position 222 (E222) interacts with Zn(2+).

It belongs to the peptidase M48B family. It depends on Zn(2+) as a cofactor.

The protein localises to the cell inner membrane. This chain is Protease HtpX, found in Yersinia enterocolitica serotype O:8 / biotype 1B (strain NCTC 13174 / 8081).